The sequence spans 128 residues: Large ribosomal subunit protein uL22 (128 aa).

Belongs to the universal ribosomal protein uL22 family. In terms of assembly, part of the 50S ribosomal subunit.

In terms of biological role, this protein binds specifically to 23S rRNA; its binding is stimulated by other ribosomal proteins, e.g. L4, L17, and L20. It is important during the early stages of 50S assembly. It makes multiple contacts with different domains of the 23S rRNA in the assembled 50S subunit and ribosome. Functionally, the globular domain of the protein is located near the polypeptide exit tunnel on the outside of the subunit, while an extended beta-hairpin is found that lines the wall of the exit tunnel in the center of the 70S ribosome. This Nitrobacter winogradskyi (strain ATCC 25391 / DSM 10237 / CIP 104748 / NCIMB 11846 / Nb-255) protein is Large ribosomal subunit protein uL22.